The chain runs to 102 residues: MIHKLTSEERKTRLEGLPHWTAVPGRDAIQRRLRFADFNEAFGFMTRVAIKAQEMNHHPEWFNVYNRVDITLSTHDADGLTERDIELARFIDGAAAHAQPGA.

The protein belongs to the pterin-4-alpha-carbinolamine dehydratase family.

The enzyme catalyses (4aS,6R)-4a-hydroxy-L-erythro-5,6,7,8-tetrahydrobiopterin = (6R)-L-erythro-6,7-dihydrobiopterin + H2O. The protein is Putative pterin-4-alpha-carbinolamine dehydratase of Burkholderia cenocepacia (strain HI2424).